Consider the following 103-residue polypeptide: Small ribosomal subunit protein uS10 (103 aa).

Belongs to the universal ribosomal protein uS10 family. As to quaternary structure, part of the 30S ribosomal subunit.

Involved in the binding of tRNA to the ribosomes. The polypeptide is Small ribosomal subunit protein uS10 (Stutzerimonas stutzeri (strain A1501) (Pseudomonas stutzeri)).